Reading from the N-terminus, the 271-residue chain is Calcium-binding protein 4 (271 aa).

Residues 1–105 (MATEHNVQLV…RSDPQQDAAQ (105 aa)) are disordered. A Phosphoserine; by PKC/PRKCZ modification is found at Ser37. Residues 45–67 (GSQKASSGDQSSSQGSEASGSSK) show a composition bias toward low complexity. Over residues 87–96 (ASHRHSHRHR) the composition is skewed to basic residues. 4 consecutive EF-hand domains span residues 125 to 160 (EELE…LGYM), 179 to 196 (GFVD…KLRE), 202 to 237 (LGVR…LLGE), and 239 to 271 (LEGT…LSTG). The Ca(2+) site is built by Asp138, Asp140, Asp142, Tyr144, and Glu149. The Ca(2+) site is built by Asp215, Asp217, Asp219, Arg221, Glu226, Asp252, Asn254, Asp256, Thr258, and Glu263.

As to quaternary structure, interacts with CACNA1F and CACNA1D (via IQ domain) in a calcium independent manner. Interacts (via N-terminus) with UNC119. In terms of processing, phosphorylated. Phosphorylation levels change with the light conditions and regulate the activity, but has no effect on calcium binding. Expressed in retina and in the inner hair cells (IHC) of the cochlea.

It is found in the cytoplasm. It localises to the presynapse. In terms of biological role, involved in normal synaptic function through regulation of Ca(2+) influx and neurotransmitter release in photoreceptor synaptic terminals and in auditory transmission. Modulator of CACNA1D and CACNA1F, suppressing the calcium-dependent inactivation and shifting the activation range to more hyperpolarized voltages. In Mus musculus (Mouse), this protein is Calcium-binding protein 4 (Cabp4).